The following is a 98-amino-acid chain: Small ribosomal subunit protein bS20 (98 aa).

Belongs to the bacterial ribosomal protein bS20 family.

In terms of biological role, binds directly to 16S ribosomal RNA. The protein is Small ribosomal subunit protein bS20 of Synechococcus elongatus (strain ATCC 33912 / PCC 7942 / FACHB-805) (Anacystis nidulans R2).